The sequence spans 182 residues: UPF0397 protein BA_2640/GBAA_2640/BAS2460 (182 aa).

A run of 5 helical transmembrane segments spans residues 9 to 29 (VVAI…GFSI), 40 to 60 (AILT…IGLI), 71 to 91 (WSIW…MGFI), 114 to 134 (ITGL…DIIV), and 142 to 162 (IVIQ…VLGL).

It belongs to the UPF0397 family.

The protein resides in the cell membrane. This chain is UPF0397 protein BA_2640/GBAA_2640/BAS2460, found in Bacillus anthracis.